A 176-amino-acid chain; its full sequence is Ferritin, middle subunit (176 aa).

One can recognise a Ferritin-like diiron domain in the interval 7 to 156 (QNYHRDCEAA…DFITNLSRMD (150 aa)). 5 residues coordinate Fe cation: E24, E59, H62, E104, and Q138.

The protein belongs to the ferritin family. In liver, forms a heteromer consisting of middle and heavy subunits. In spleen, forms a homomer. The functional molecule forms a roughly spherical shell with a diameter of 12 nm and contains a central cavity into which the insoluble mineral iron core is deposited. In terms of tissue distribution, liver and spleen (at protein level).

It carries out the reaction 4 Fe(2+) + O2 + 4 H(+) = 4 Fe(3+) + 2 H2O. Its function is as follows. Stores iron in a soluble, non-toxic, readily available form. Important for iron homeostasis. Has ferroxidase activity. Iron is taken up in the ferrous form and deposited as ferric hydroxides after oxidation. The chain is Ferritin, middle subunit from Trematomus newnesi (Dusky notothen).